We begin with the raw amino-acid sequence, 446 residues long: Gasdermin-A (446 aa).

A triggers pyroptosis region spans residues M1–G252. An a cardiolipin-binding site is contributed by R9–R13. Beta stranded transmembrane passes span N78–V95, V99–V120, V164–F180, and L184–I198.

It belongs to the gasdermin family. Homooligomer; homooligomeric ring-shaped pore complex containing 18-36 subunits when inserted in the membrane. Post-translationally, cleavage by bacterial SpeB relieves autoinhibition by releasing the N-terminal moiety (Gasdermin-A, N-terminal) that initiates pyroptosis. Palmitoylated. Expressed predominantly in the gastrointestinal (GI) tract and in the skin at a lower level. In the GI tract, the expression is highly restricted to the esophagus and forestomach.

Its subcellular location is the cytoplasm. It is found in the perinuclear region. The protein resides in the cytosol. The protein localises to the cell membrane. Its activity is regulated as follows. The full-length protein before cleavage is inactive: intramolecular interactions between N- and C-terminal domains mediate autoinhibition in the absence of activation signal. The intrinsic pyroptosis-inducing activity is carried by the released N-terminal moiety (Gasdermin-A, N-terminal) following cleavage by bacterial effector protein SpeB. In terms of biological role, this form constitutes the precursor of the pore-forming protein and acts as a sensor of bacterial infection: upon infection, specifically cleaved by bacterial effector protein SpeB in epithelial cells, releasing the N-terminal moiety (Gasdermin-A, N-terminal) that binds to membranes and forms pores, triggering pyroptosis. Functionally, pore-forming protein that causes membrane permeabilization and pyroptosis. Released upon cleavage by bacterial effector protein SpeB, and binds to membrane inner leaflet lipids. Homooligomerizes within the membrane and forms pores of 10-15 nanometers (nm) of inner diameter, triggering pyroptosis. Pyroptosis triggers the elimination of the infected skin cell, depriving the pathogen of its protective niche, while inducing an inflammatory response. This ultimately prevents bacterial penetration of the epithelial barrier and a subsequent systemic dissemination of the pathogen. Binds to cardiolipin and other acidic phospholipids, such as phosphatidylserine, which mediate its targeting to the inner leaflet membrane. The sequence is that of Gasdermin-A (Gsdma) from Mus musculus (Mouse).